The following is a 94-amino-acid chain: ATP synthase subunit c (94 aa).

Helical transmembrane passes span Val15–Ile35 and Gly61–Ala81.

The protein belongs to the ATPase C chain family. F-type ATPases have 2 components, F(1) - the catalytic core - and F(0) - the membrane proton channel. F(1) has five subunits: alpha(3), beta(3), gamma(1), delta(1), epsilon(1). F(0) has three main subunits: a(1), b(2) and c(10-14). The alpha and beta chains form an alternating ring which encloses part of the gamma chain. F(1) is attached to F(0) by a central stalk formed by the gamma and epsilon chains, while a peripheral stalk is formed by the delta and b chains.

Its subcellular location is the cell inner membrane. F(1)F(0) ATP synthase produces ATP from ADP in the presence of a proton or sodium gradient. F-type ATPases consist of two structural domains, F(1) containing the extramembraneous catalytic core and F(0) containing the membrane proton channel, linked together by a central stalk and a peripheral stalk. During catalysis, ATP synthesis in the catalytic domain of F(1) is coupled via a rotary mechanism of the central stalk subunits to proton translocation. In terms of biological role, key component of the F(0) channel; it plays a direct role in translocation across the membrane. A homomeric c-ring of between 10-14 subunits forms the central stalk rotor element with the F(1) delta and epsilon subunits. The polypeptide is ATP synthase subunit c (Nitrosococcus oceani (strain ATCC 19707 / BCRC 17464 / JCM 30415 / NCIMB 11848 / C-107)).